We begin with the raw amino-acid sequence, 220 residues long: 7-cyano-7-deazaguanine synthase (220 aa).

7–17 (ISGGMDSSTAA) contributes to the ATP binding site. Zn(2+)-binding residues include Cys187, Cys195, Cys198, and Cys201.

The protein belongs to the QueC family. It depends on Zn(2+) as a cofactor.

The catalysed reaction is 7-carboxy-7-deazaguanine + NH4(+) + ATP = 7-cyano-7-deazaguanine + ADP + phosphate + H2O + H(+). Its pathway is purine metabolism; 7-cyano-7-deazaguanine biosynthesis. Its function is as follows. Catalyzes the ATP-dependent conversion of 7-carboxy-7-deazaguanine (CDG) to 7-cyano-7-deazaguanine (preQ(0)). This chain is 7-cyano-7-deazaguanine synthase, found in Campylobacter hominis (strain ATCC BAA-381 / DSM 21671 / CCUG 45161 / LMG 19568 / NCTC 13146 / CH001A).